The sequence spans 487 residues: Histamine H1 receptor (487 aa).

Over 1–29 (MSLPNSSCLLEDKMCESNKTTMASPQLMP) the chain is Extracellular. N-linked (GlcNAc...) asparagine glycans are attached at residues N5 and N18. Residues 30-50 (LVVVLSTICLVTVGLNLLVLY) form a helical membrane-spanning segment. The Cytoplasmic segment spans residues 51–64 (AVRSERKLHTVGNL). The helical transmembrane segment at 65–89 (YIVSLSVADLIVGAVVMPMNILYLL) threads the bilayer. Over 90–97 (MSKWSLGR) the chain is Extracellular. A helical transmembrane segment spans residues 98-123 (PLCLFWLSMDYVASTASIFSVFILCI). The cysteines at positions 100 and 180 are disulfide-linked. Histamine-binding residues include D107 and T112. Residues 107-112 (DYVAST) form an important for agonist binding region. Residues 124-144 (DRYRSVQQPLRYLKYRTKTRA) lie on the Cytoplasmic side of the membrane. Phosphothreonine occurs at positions 140 and 142. The helical transmembrane segment at 145 to 164 (SATILGAWFLSFLWVIPILG) threads the bilayer. Residues 165 to 188 (WNHFMQQTSVRREDKCETDFYDVT) are Extracellular-facing. A helical membrane pass occupies residues 189–211 (WFKVMTAIINFYLPTLLMLWFYA). N198 lines the histamine pocket. The Cytoplasmic segment spans residues 212–416 (KIYKAVRQHC…MNRERKAAKQ (205 aa)). A Phosphoserine modification is found at S230. A compositionally biased stretch (basic and acidic residues) spans 238–261 (KLRPENPKGDAKKPGKESPWEVLK). The disordered stretch occupies residues 238-292 (KLRPENPKGDAKKPGKESPWEVLKRKPKDAGGGSVLKSPSQTPKEMKSPVVFSQE). T279 carries the post-translational modification Phosphothreonine. Phosphoserine is present on residues S344 and S347. Positions 345 to 377 (EISEDQMLGDSQSFSRTDSDTTTETASGKGKLR) are disordered. Positions 353–370 (GDSQSFSRTDSDTTTETA) are enriched in polar residues. S380, S396, and S398 each carry phosphoserine. A helical transmembrane segment spans residues 417-440 (LGFIMAAFILCWIPYFIFFMVIAF). The important for agonist binding stretch occupies residues 424 to 428 (FILCW). A histamine-binding site is contributed by Y431. A disulfide bond links C441 and C444. Residues 441 to 446 (CKNCCN) are Extracellular-facing. The helical transmembrane segment at 447–469 (EHLHMFTIWLGYINSTLNPLIYP) threads the bilayer. Residues 470–487 (LCNENFKKTFKRILHIRS) lie on the Cytoplasmic side of the membrane.

Belongs to the G-protein coupled receptor 1 family. Post-translationally, phosphorylation at sites in the second and third cytoplasmic loops independently contribute to agonist-induced receptor down-regulation.

Its subcellular location is the cell membrane. G-protein-coupled receptor for histamine, a biogenic amine that functions as an immune modulator and a neurotransmitter. Through the H1 receptor, histamine mediates the contraction of smooth muscles and increases capillary permeability due to contraction of terminal venules. Also mediates neurotransmission in the central nervous system and thereby regulates circadian rhythms, emotional and locomotor activities as well as cognitive functions. This chain is Histamine H1 receptor, found in Gorilla gorilla gorilla (Western lowland gorilla).